The sequence spans 385 residues: Protein hunchback (385 aa).

Disordered stretches follow at residues 1 to 94 (IGGI…YDAM) and 124 to 216 (ESRA…PGLR). Low complexity predominate over residues 63-77 (SASPSSSSKDSNGHS). 2 stretches are compositionally biased toward basic and acidic residues: residues 126-135 (RASDARDHSP) and 173-203 (PERRSFDRFHDSGFDGVDHNKHDGDDGREGS). C2H2-type zinc fingers lie at residues 229–251 (FKCKQCEFVAVTKLSFWEHSKEH), 258–280 (LCCRKCPFVTEYKHHLEYHMRNH), 286–308 (FQCSQCSYSCVNKSMLNSHLKSH), and 314–338 (YRCADCNYATKYCDSLKLHLRKYQH). A disordered region spans residues 361 to 385 (TRRGPKQKPLSKIFEQQTGTNNHSP). The span at 374–385 (FEQQTGTNNHSP) shows a compositional bias: polar residues.

It belongs to the hunchback C2H2-type zinc-finger protein family.

The protein localises to the nucleus. Its function is as follows. Gap class segmentation protein that controls development of head structures. The sequence is that of Protein hunchback (hb) from Bombyx mori (Silk moth).